The sequence spans 454 residues: UDP-N-acetylmuramate--L-alanine ligase (454 aa).

Position 113-119 (113-119 (GSHGKTT)) interacts with ATP.

This sequence belongs to the MurCDEF family.

Its subcellular location is the cytoplasm. It carries out the reaction UDP-N-acetyl-alpha-D-muramate + L-alanine + ATP = UDP-N-acetyl-alpha-D-muramoyl-L-alanine + ADP + phosphate + H(+). Its pathway is cell wall biogenesis; peptidoglycan biosynthesis. Functionally, cell wall formation. The polypeptide is UDP-N-acetylmuramate--L-alanine ligase (Sulfurihydrogenibium sp. (strain YO3AOP1)).